Reading from the N-terminus, the 361-residue chain is Peptide chain release factor 1 (361 aa).

At Gln-237 the chain carries N5-methylglutamine. Residues Asp-285–Arg-296 are compositionally biased toward basic and acidic residues. The interval Asp-285–Arg-305 is disordered.

This sequence belongs to the prokaryotic/mitochondrial release factor family. Post-translationally, methylated by PrmC. Methylation increases the termination efficiency of RF1.

It is found in the cytoplasm. Peptide chain release factor 1 directs the termination of translation in response to the peptide chain termination codons UAG and UAA. The protein is Peptide chain release factor 1 of Shewanella halifaxensis (strain HAW-EB4).